The sequence spans 378 residues: MPSSWGKIFRVSTFGESHGTSVGVVVDGVPAGLPFPEEEIQKDLTRRRPGQNDLTTPRDEKDRMVVESGVFEGKTTGSPILMKVNNQNTIGSDYDEMAHVFRPSHADYTYSEKYGHRAHVGGGRSSVRETIGRVAAAGLARVILENELGISTVGFVDSIGPIDSNITEDEYPISRDLVDQFPTRCPKASANEEMETLIRKLRDEGDSVGGVVKVVVRNLPPGLGDPVYDKLDADLAKAILSISACKGFEVGSGFSGTRQTGSTHNDEFYIEEGTGKVKTRTNRSGGIQGGISNGMDLVIRAAFKPTSTIKKEQKTINDQNKETILKAKGRHDPCVLPRAVPIVEAVVNLVLVDAYLYQRALQPKWFMKYANLNAIPNQ.

The segment at 37–60 is disordered; it reads EEEIQKDLTRRRPGQNDLTTPRDE. Arg47 provides a ligand contact to NADP(+). FMN-binding positions include 124–126, Gly289, 304–308, and Arg330; these read RSS and KPTST.

It belongs to the chorismate synthase family. As to quaternary structure, homotetramer. The cofactor is FMNH2.

The enzyme catalyses 5-O-(1-carboxyvinyl)-3-phosphoshikimate = chorismate + phosphate. The protein operates within metabolic intermediate biosynthesis; chorismate biosynthesis; chorismate from D-erythrose 4-phosphate and phosphoenolpyruvate: step 7/7. In terms of biological role, catalyzes the anti-1,4-elimination of the C-3 phosphate and the C-6 proR hydrogen from 5-enolpyruvylshikimate-3-phosphate (EPSP) to yield chorismate, which is the branch point compound that serves as the starting substrate for the three terminal pathways of aromatic amino acid biosynthesis. This reaction introduces a second double bond into the aromatic ring system. In Leptospira biflexa serovar Patoc (strain Patoc 1 / Ames), this protein is Chorismate synthase.